The following is a 414-amino-acid chain: Small ribosomal subunit protein mS46 (414 aa).

Polar residues predominate over residues 20–35 (LNAQQQQRPFSSTTTR). Disordered regions lie at residues 20 to 71 (LNAQ…EAAV) and 168 to 229 (AGPG…DAPP). 2 stretches are compositionally biased toward low complexity: residues 45–59 (PAAAPSTPRAAAPGP) and 168–200 (AGPGAAAGRPRFGAAASPGAGPTGAARRPPFGA). The segment covering 205–224 (PAGDKKRSGGSGDKRPRGDD) has biased composition (basic and acidic residues).

Belongs to the mitochondrion-specific ribosomal protein mS46 family. As to quaternary structure, component of the mitochondrial small ribosomal subunit (mt-SSU). Mature N.crassa 74S mitochondrial ribosomes consist of a small (37S) and a large (54S) subunit. The 37S small subunit contains a 16S ribosomal RNA (16S mt-rRNA) and 32 different proteins. The 54S large subunit contains a 23S rRNA (23S mt-rRNA) and 42 different proteins.

It localises to the mitochondrion. Component of the mitochondrial ribosome (mitoribosome), a dedicated translation machinery responsible for the synthesis of mitochondrial genome-encoded proteins, including at least some of the essential transmembrane subunits of the mitochondrial respiratory chain. The mitoribosomes are attached to the mitochondrial inner membrane and translation products are cotranslationally integrated into the membrane. This Neurospora crassa (strain ATCC 24698 / 74-OR23-1A / CBS 708.71 / DSM 1257 / FGSC 987) protein is Small ribosomal subunit protein mS46 (rsm28).